A 521-amino-acid chain; its full sequence is Ribonuclease Y (521 aa).

The helical transmembrane segment at 5-25 (TVWILISILLATVGAVVGFFV) threads the bilayer. A disordered region spans residues 87 to 117 (KQENRLMQKEENLDRKDETLDNRERQLEKKE). Residues 211 to 274 (TVSVVNLPND…ETARIALDKL (64 aa)) enclose the KH domain. The region spanning 337-430 (VLKHSMEVAY…VAAADALSAA (94 aa)) is the HD domain.

The protein belongs to the RNase Y family.

It localises to the cell membrane. Endoribonuclease that initiates mRNA decay. The chain is Ribonuclease Y from Bacillus mycoides (strain KBAB4) (Bacillus weihenstephanensis).